Consider the following 249-residue polypeptide: 5'-nucleotidase SurE (249 aa).

A divalent metal cation contacts are provided by Asp-9, Asp-10, Ser-40, and Asn-92.

The protein belongs to the SurE nucleotidase family. A divalent metal cation serves as cofactor.

The protein localises to the cytoplasm. It catalyses the reaction a ribonucleoside 5'-phosphate + H2O = a ribonucleoside + phosphate. In terms of biological role, nucleotidase that shows phosphatase activity on nucleoside 5'-monophosphates. This is 5'-nucleotidase SurE from Shewanella loihica (strain ATCC BAA-1088 / PV-4).